A 330-amino-acid polypeptide reads, in one-letter code: Phosphate acyltransferase (330 aa).

It belongs to the PlsX family. In terms of assembly, homodimer. Probably interacts with PlsY.

Its subcellular location is the cytoplasm. The catalysed reaction is a fatty acyl-[ACP] + phosphate = an acyl phosphate + holo-[ACP]. Its pathway is lipid metabolism; phospholipid metabolism. Catalyzes the reversible formation of acyl-phosphate (acyl-PO(4)) from acyl-[acyl-carrier-protein] (acyl-ACP). This enzyme utilizes acyl-ACP as fatty acyl donor, but not acyl-CoA. The chain is Phosphate acyltransferase from Campylobacter hominis (strain ATCC BAA-381 / DSM 21671 / CCUG 45161 / LMG 19568 / NCTC 13146 / CH001A).